A 461-amino-acid polypeptide reads, in one-letter code: Integrator complex subunit 12 (461 aa).

A disordered region spans residues 42-131; that stretch reads GIDSSYRPTQ…PETRSSPITV (90 aa). Lysine 68 is covalently cross-linked (Glycyl lysine isopeptide (Lys-Gly) (interchain with G-Cter in SUMO2)). Residues 88-124 are compositionally biased toward basic and acidic residues; that stretch reads TAEKIKKEAEKRPADKMKDVTEGIDVPKKPRLEKPET. A Phosphoserine modification is found at serine 127. The PHD-type zinc finger occupies 158-214; that stretch reads GLACVVCRQMTVASGNQLVECQECHNLYHQDCHKPQVTDKEVNDPRLVWYCARCTRQ. A Glycyl lysine isopeptide (Lys-Gly) (interchain with G-Cter in SUMO2) cross-link involves residue lysine 253. Positions 302–328 are enriched in polar residues; that stretch reads AGPSTAKLNSAAQNSSGKPAASSSNQK. The tract at residues 302–443 is disordered; sequence AGPSTAKLNS…PTSQESQLNA (142 aa). 2 stretches are compositionally biased toward low complexity: residues 348–357 and 381–436; these read GSGNSTSPSV and VSKV…GPTS.

It belongs to the Integrator subunit 12 family. As to quaternary structure, component of the Integrator complex, composed of core subunits INTS1, INTS2, INTS3, INTS4, INTS5, INTS6, INTS7, INTS8, INTS9/RC74, INTS10, INTS11/CPSF3L, INTS12, INTS13, INTS14 and INTS15. The core complex associates with protein phosphatase 2A subunits PPP2CA and PPP2R1A, to form the Integrator-PP2A (INTAC) complex. Dephosphorylated at Ser-127 by the PNUTS-PP1 complex, promoting RNA polymerase II transcription pause-release.

It is found in the nucleus. In terms of biological role, component of the integrator complex, a multiprotein complex that terminates RNA polymerase II (Pol II) transcription in the promoter-proximal region of genes. The integrator complex provides a quality checkpoint during transcription elongation by driving premature transcription termination of transcripts that are unfavorably configured for transcriptional elongation: the complex terminates transcription by (1) catalyzing dephosphorylation of the C-terminal domain (CTD) of Pol II subunit POLR2A/RPB1 and SUPT5H/SPT5, (2) degrading the exiting nascent RNA transcript via endonuclease activity and (3) promoting the release of Pol II from bound DNA. The integrator complex is also involved in terminating the synthesis of non-coding Pol II transcripts, such as enhancer RNAs (eRNAs), small nuclear RNAs (snRNAs), telomerase RNAs and long non-coding RNAs (lncRNAs). Mediates recruitment of cytoplasmic dynein to the nuclear envelope, probably as component of the integrator complex. The polypeptide is Integrator complex subunit 12 (Ints12) (Mus musculus (Mouse)).